Consider the following 213-residue polypeptide: Large ribosomal subunit protein uL3 (213 aa).

Q151 carries the N5-methylglutamine modification.

It belongs to the universal ribosomal protein uL3 family. As to quaternary structure, part of the 50S ribosomal subunit. Forms a cluster with proteins L14 and L19. Methylated by PrmB.

Its function is as follows. One of the primary rRNA binding proteins, it binds directly near the 3'-end of the 23S rRNA, where it nucleates assembly of the 50S subunit. In Rhizobium etli (strain CIAT 652), this protein is Large ribosomal subunit protein uL3.